The chain runs to 348 residues: Endoplasmic reticulum junction formation protein lunapark-A (348 aa).

Residues 1–43 (MSVFCLQAKPTTVEILEGIDKDIQILEDYSVKYQRQMKAVVGR) are Cytoplasmic-facing. The chain crosses the membrane as a helical span at residues 44-64 (LLLYSILLYLMAGVVVYSWYL). At 65-67 (PEQ) the chain is on the lumenal side. A helical transmembrane segment spans residues 68-88 (LMGRLVLGLPFLLFPLLVWIL). At 89–348 (RKVLILFFAR…EEDKQSDSGD (260 aa)) the chain is on the cytoplasmic side. Positions 105–126 (FKLEDLKAQKRKILEDVMETET) form a coiled coil. Residues 142-211 (KKKTDFDSTP…HSAPGGPPER (70 aa)) form a disordered region. The C4-type; plays a role in ER morphology zinc-finger motif lies at 277–302 (CQQCLSHNGMALKEEFEYVAFRCAYC). The segment at 313–348 (PQAPRLPETAGEPKLPCDLNSSSCAAEEDKQSDSGD) is disordered. Positions 339 to 348 (EEDKQSDSGD) are enriched in basic and acidic residues.

Belongs to the lunapark family. As to quaternary structure, homodimer; homodimerization requires the C4-type zinc finger motif and decreases during mitosis in a phosphorylation-dependent manner. Phosphorylated. Phosphorylation occurs during interphase. Phosphorylation also occurs during mitosis; these phosphorylations reduce both its homodimerization and the ER three-way tubular junction formation.

It localises to the endoplasmic reticulum membrane. Endoplasmic reticulum (ER)-shaping membrane protein that plays a role in determining ER morphology. Involved in the stabilization of nascent three-way ER tubular junctions within the ER network. May also play a role as a curvature-stabilizing protein within three-way ER tubular junction network. This is Endoplasmic reticulum junction formation protein lunapark-A (lnpka) from Takifugu rubripes (Japanese pufferfish).